Consider the following 446-residue polypeptide: Na(+)-translocating NADH-quinone reductase subunit A (446 aa).

This sequence belongs to the NqrA family. In terms of assembly, composed of six subunits; NqrA, NqrB, NqrC, NqrD, NqrE and NqrF.

It catalyses the reaction a ubiquinone + n Na(+)(in) + NADH + H(+) = a ubiquinol + n Na(+)(out) + NAD(+). Functionally, NQR complex catalyzes the reduction of ubiquinone-1 to ubiquinol by two successive reactions, coupled with the transport of Na(+) ions from the cytoplasm to the periplasm. NqrA to NqrE are probably involved in the second step, the conversion of ubisemiquinone to ubiquinol. The protein is Na(+)-translocating NADH-quinone reductase subunit A of Psychromonas ingrahamii (strain DSM 17664 / CCUG 51855 / 37).